A 219-amino-acid polypeptide reads, in one-letter code: MSFNSNASKYQAENTVDKLFSNILHTSTTSKSVSKSKSKSKSKPKPISSTQLLVNQLQSTNTTANNNNTKRKKHNNNKRINKTLLEEKKFSKFIKYNHIKQKSNKSELDEKYLNKLVRKNINSLNKINKIDDLLIDEELNQIKQELLEENEFVGMGGGQLKGGKRLRKKLLNNTKQVIDEFDGFGEISSSNNNNKKKNSSYPGLTPGLAPVDYEEEDNE.

Disordered regions lie at residues 27–79 (STTS…NNKR) and 186–219 (EISS…EDNE). Composition is skewed to basic residues over residues 34–44 (SKSKSKSKSKP) and 69–79 (TKRKKHNNNKR).

This sequence belongs to the RRT14 family.

Its subcellular location is the nucleus. It is found in the nucleolus. Functionally, involved in ribosome biogenesis, probably through modulation of rDNA transcription. The protein is Regulator of rDNA transcription 14 (RRT14) of Candida albicans (strain SC5314 / ATCC MYA-2876) (Yeast).